A 64-amino-acid polypeptide reads, in one-letter code: DNA-directed RNA polymerase subunit Rpo10 (64 aa).

The Zn(2+) site is built by C7, C10, C45, and C46.

Belongs to the archaeal Rpo10/eukaryotic RPB10 RNA polymerase subunit family. As to quaternary structure, part of the RNA polymerase complex. The cofactor is Zn(2+).

It is found in the cytoplasm. The enzyme catalyses RNA(n) + a ribonucleoside 5'-triphosphate = RNA(n+1) + diphosphate. Functionally, DNA-dependent RNA polymerase (RNAP) catalyzes the transcription of DNA into RNA using the four ribonucleoside triphosphates as substrates. This is DNA-directed RNA polymerase subunit Rpo10 from Halorubrum lacusprofundi (strain ATCC 49239 / DSM 5036 / JCM 8891 / ACAM 34).